The primary structure comprises 265 residues: Thiamine thiazole synthase (265 aa).

Residues alanine 43, 62-63 (ER), glycine 70, valine 134, and 162-164 (HVD) each bind NAD(+). Residues aspartate 164 and histidine 179 each coordinate Fe cation. Methionine 229 is a binding site for NAD(+). Arginine 239 is a binding site for glycine.

Belongs to the THI4 family. Homooctamer; tetramer of dimers. It depends on Fe(2+) as a cofactor.

It carries out the reaction hydrogen sulfide + glycine + NAD(+) = ADP-5-ethyl-4-methylthiazole-2-carboxylate + nicotinamide + 3 H2O + H(+). Its pathway is cofactor biosynthesis; thiamine diphosphate biosynthesis. Its function is as follows. Involved in the biosynthesis of the thiazole moiety of thiamine. Catalyzes the conversion of NAD and glycine to adenosine diphosphate 5-(2-hydroxyethyl)-4-methylthiazole-2-carboxylate (ADT), an adenylated thiazole intermediate, using free sulfide as a source of sulfur. The polypeptide is Thiamine thiazole synthase (Sulfolobus acidocaldarius (strain ATCC 33909 / DSM 639 / JCM 8929 / NBRC 15157 / NCIMB 11770)).